A 298-amino-acid chain; its full sequence is S-adenosyl-L-methionine-dependent methyltransferase dpfgK (298 aa).

It belongs to the methyltransferase superfamily.

The protein operates within secondary metabolite biosynthesis; terpenoid biosynthesis. In terms of biological role, S-adenosyl-L-methionine-dependent methyltransferase; part of the gene cluster that mediates the biosynthesis of diterpenoid pyrones. The first step of the pathway is the synthesis of the alpha-pyrone moiety by the polyketide synthase dpfgA via condensation of one acetyl-CoA starter unit with 3 malonyl-CoA units and 2 methylations. The alpha-pyrone is then combined with geranylgeranyl pyrophosphate (GGPP) formed by the GGPP synthase dpfgD through the action of the prenyltransferase dpfgC to yield a linear alpha-pyrone diterpenoid. Subsequent steps in the diterpenoid pyrone biosynthetic pathway involve the decalin core formation, which is initiated by the epoxidation of the C10-C11 olefin by the FAD-dependent oxidoreductase dpfgE, and is followed by a cyclization cascade catalyzed by the terpene cyclase dpfgB. The short chain dehydrogenase/reductase dpfgG then oxidizes the 8S hydroxy group to a ketone and the short chain dehydrogenase/reductase dpfgH reduces the ketone to the 8R hydroxy group to yield higginsianin B. Higginsianin B is further methylated by the methyltransferase dpfgI to produce the intermediate named FDDP B. The cytochrome P450 monooxygenase dfgpJ then catalyzes a three-step oxidation at C-27 to generate a carboxylic acid as well as C-26 hydroxylation. Finally, methyltransferase dpfgK methylates the carboxylic acid generated by dpfgJ, yielding the final diterpenoid pyrones from the pathway which were named FDDP D and FDDP E. The chain is S-adenosyl-L-methionine-dependent methyltransferase dpfgK from Gibberella zeae (strain ATCC MYA-4620 / CBS 123657 / FGSC 9075 / NRRL 31084 / PH-1) (Wheat head blight fungus).